We begin with the raw amino-acid sequence, 361 residues long: DNA polymerase IV 3 (361 aa).

The UmuC domain occupies 12-192 (IIHVDMDAFY…LPVNKFHGVG (181 aa)). 2 residues coordinate Mg(2+): Asp-16 and Asp-110. The active site involves Glu-111.

Belongs to the DNA polymerase type-Y family. As to quaternary structure, monomer. Mg(2+) is required as a cofactor.

Its subcellular location is the cytoplasm. It catalyses the reaction DNA(n) + a 2'-deoxyribonucleoside 5'-triphosphate = DNA(n+1) + diphosphate. Poorly processive, error-prone DNA polymerase involved in untargeted mutagenesis. Copies undamaged DNA at stalled replication forks, which arise in vivo from mismatched or misaligned primer ends. These misaligned primers can be extended by PolIV. Exhibits no 3'-5' exonuclease (proofreading) activity. May be involved in translesional synthesis, in conjunction with the beta clamp from PolIII. This Mesorhizobium japonicum (strain LMG 29417 / CECT 9101 / MAFF 303099) (Mesorhizobium loti (strain MAFF 303099)) protein is DNA polymerase IV 3 (dinB3).